A 700-amino-acid chain; its full sequence is Stonustoxin subunit beta (700 aa).

The interval 2–264 (PSDILVVAAL…EAPQLMADSS (263 aa)) is structural MACPF/CDC pore-forming domain. A structural FAT domain region spans residues 265 to 384 (TPILRKVRNT…DILTKAKPKV (120 aa)). A thioredoxin (THX) domain region spans residues 385–514 (IFNQGVLFKG…PYMPGVESIK (130 aa)). Residues 506-700 (YMPGVESIKD…QKVNGQIKLL (195 aa)) enclose the B30.2/SPRY domain.

The protein belongs to the SNTX/VTX toxin family. In terms of assembly, heterodimer of alpha and beta subunits; non-covalently linked. Post-translationally, intrachain disulfide bonds may be present in the heterodimer. In terms of processing, not glycosylated. Expressed by the venom gland.

Its subcellular location is the secreted. Functionally, this lethal (towards mammals) heterodimer induces hemolytic activities due to its ability to form pores in the cell membrane. The pore may be composed of 10 SNTX-alpha/beta heterodimers. The toxin elicits potent hypotension which is endothelium-dependent and appears to be mediated by the nitric oxide pathway and activation of potassium channels. In addition, it displays edema-inducing activities, increases vascular permeability. It also shows myotoxic activities and interferes irreversibly with neuromuscular function. It also induces irreversible platelet aggregation in rabbit or rat but not in human or mouse whole blood. In addition, it has been observed to increase spontaneous quantal acetylcholine release from isolated frog cutaneous pectoris motor endings. The polypeptide is Stonustoxin subunit beta (Synanceia horrida (Estuarine stonefish)).